Consider the following 159-residue polypeptide: 16 kDa outer membrane lipoprotein (159 aa).

The first 21 residues, methionine 1–serine 21, serve as a signal peptide directing secretion. Cysteine 22 is lipidated: N-palmitoyl cysteine. The S-diacylglycerol cysteine moiety is linked to residue cysteine 22.

It is found in the cell outer membrane. In Brachyspira hyodysenteriae (Treponema hyodysenteriae), this protein is 16 kDa outer membrane lipoprotein (smpA).